Reading from the N-terminus, the 447-residue chain is 3-phosphoshikimate 1-carboxyvinyltransferase (447 aa).

Residues Lys36, Ser37, and Arg41 each contribute to the 3-phosphoshikimate site. Residue Lys36 participates in phosphoenolpyruvate binding. Residues Gly109 and Arg138 each contribute to the phosphoenolpyruvate site. Residues Ser183, Gln185, Asp333, and Lys360 each contribute to the 3-phosphoshikimate site. Gln185 provides a ligand contact to phosphoenolpyruvate. The Proton acceptor role is filled by Asp333. 2 residues coordinate phosphoenolpyruvate: Arg364 and Arg406.

It belongs to the EPSP synthase family. Monomer.

The protein resides in the cytoplasm. The enzyme catalyses 3-phosphoshikimate + phosphoenolpyruvate = 5-O-(1-carboxyvinyl)-3-phosphoshikimate + phosphate. The protein operates within metabolic intermediate biosynthesis; chorismate biosynthesis; chorismate from D-erythrose 4-phosphate and phosphoenolpyruvate: step 6/7. Its function is as follows. Catalyzes the transfer of the enolpyruvyl moiety of phosphoenolpyruvate (PEP) to the 5-hydroxyl of shikimate-3-phosphate (S3P) to produce enolpyruvyl shikimate-3-phosphate and inorganic phosphate. The chain is 3-phosphoshikimate 1-carboxyvinyltransferase from Synechocystis sp. (strain ATCC 27184 / PCC 6803 / Kazusa).